The chain runs to 137 residues: Large ribosomal subunit protein uL16 (137 aa).

The protein belongs to the universal ribosomal protein uL16 family. As to quaternary structure, part of the 50S ribosomal subunit.

Functionally, binds 23S rRNA and is also seen to make contacts with the A and possibly P site tRNAs. This chain is Large ribosomal subunit protein uL16, found in Chelativorans sp. (strain BNC1).